The chain runs to 74 residues: Conotoxin Vc6.11 (74 aa).

Positions M1 to A19 are cleaved as a signal peptide. The propeptide occupies L20–E41. 2 cysteine pairs are disulfide-bonded: C55-C66 and C61-C71.

The protein belongs to the conotoxin O2 superfamily. In terms of tissue distribution, expressed by the venom duct.

It is found in the secreted. Its function is as follows. Inhibits voltage-gated ion channels. This is Conotoxin Vc6.11 from Conus victoriae (Queen Victoria cone).